Reading from the N-terminus, the 384-residue chain is L-cysteine:1D-myo-inositol 2-amino-2-deoxy-alpha-D-glucopyranoside ligase (384 aa).

Position 16 (cysteine 16) interacts with Zn(2+). L-cysteinyl-5'-AMP is bound by residues 16-19 (CGIT), threonine 31, and 54-56 (NVT). The short motif at 18-28 (ITPYDATHLGH) is the 'HIGH' region element. Positions 159–164 (ERGGDP) match the 'ERGGDP' region motif. L-cysteinyl-5'-AMP is bound at residue tryptophan 199. Cysteine 203 is a binding site for Zn(2+). Residue 221–223 (GSD) participates in L-cysteinyl-5'-AMP binding. Residue histidine 228 participates in Zn(2+) binding. Isoleucine 255 contributes to the L-cysteinyl-5'-AMP binding site. A 'KMSKS' region motif is present at residues 261-265 (KMSKS).

The protein belongs to the class-I aminoacyl-tRNA synthetase family. MshC subfamily. In terms of assembly, monomer. Zn(2+) serves as cofactor.

It carries out the reaction 1D-myo-inositol 2-amino-2-deoxy-alpha-D-glucopyranoside + L-cysteine + ATP = 1D-myo-inositol 2-(L-cysteinylamino)-2-deoxy-alpha-D-glucopyranoside + AMP + diphosphate + H(+). Catalyzes the ATP-dependent condensation of GlcN-Ins and L-cysteine to form L-Cys-GlcN-Ins. The sequence is that of L-cysteine:1D-myo-inositol 2-amino-2-deoxy-alpha-D-glucopyranoside ligase from Mycobacterium avium (strain 104).